Here is a 680-residue protein sequence, read N- to C-terminus: UvrABC system protein C (680 aa).

The 79-residue stretch at 66 to 144 (NSPGVYRMFN…IKRLRPRFNV (79 aa)) folds into the GIY-YIG domain. In terms of domain architecture, UVR spans 254–289 (QKVKSHMAEAMNQAAEDLDFERAAIYRDRLAALSHV).

Belongs to the UvrC family. As to quaternary structure, interacts with UvrB in an incision complex.

The protein localises to the cytoplasm. The UvrABC repair system catalyzes the recognition and processing of DNA lesions. UvrC both incises the 5' and 3' sides of the lesion. The N-terminal half is responsible for the 3' incision and the C-terminal half is responsible for the 5' incision. In Rhizobium johnstonii (strain DSM 114642 / LMG 32736 / 3841) (Rhizobium leguminosarum bv. viciae), this protein is UvrABC system protein C.